The following is a 338-amino-acid chain: Phenylalanine--tRNA ligase alpha subunit (338 aa).

A Mg(2+)-binding site is contributed by E252.

The protein belongs to the class-II aminoacyl-tRNA synthetase family. Phe-tRNA synthetase alpha subunit type 1 subfamily. Tetramer of two alpha and two beta subunits. Requires Mg(2+) as cofactor.

The protein localises to the cytoplasm. The catalysed reaction is tRNA(Phe) + L-phenylalanine + ATP = L-phenylalanyl-tRNA(Phe) + AMP + diphosphate + H(+). This is Phenylalanine--tRNA ligase alpha subunit (pheS) from Aquifex aeolicus (strain VF5).